The following is a 502-amino-acid chain: ATP synthase subunit alpha (502 aa).

169-176 (GDRQTGKT) provides a ligand contact to ATP.

Belongs to the ATPase alpha/beta chains family. F-type ATPases have 2 components, CF(1) - the catalytic core - and CF(0) - the membrane proton channel. CF(1) has five subunits: alpha(3), beta(3), gamma(1), delta(1), epsilon(1). CF(0) has three main subunits: a(1), b(2) and c(9-12). The alpha and beta chains form an alternating ring which encloses part of the gamma chain. CF(1) is attached to CF(0) by a central stalk formed by the gamma and epsilon chains, while a peripheral stalk is formed by the delta and b chains.

It localises to the cell membrane. The enzyme catalyses ATP + H2O + 4 H(+)(in) = ADP + phosphate + 5 H(+)(out). Its function is as follows. Produces ATP from ADP in the presence of a proton gradient across the membrane. The alpha chain is a regulatory subunit. In Bacillus pumilus (strain SAFR-032), this protein is ATP synthase subunit alpha.